We begin with the raw amino-acid sequence, 419 residues long: Napsin-A (419 aa).

Residues 1-16 (MSPLLLLLLCLLLGNL) form the signal peptide. Positions 73-394 (YFGTIGLGTP…KNVGPRVGLA (322 aa)) constitute a Peptidase A1 domain. An N-linked (GlcNAc...) asparagine glycan is attached at asparagine 85. Aspartate 91 is a catalytic residue. A disulfide bridge connects residues cysteine 104 and cysteine 111. N-linked (GlcNAc...) asparagine glycosylation is found at asparagine 128 and asparagine 149. Cysteine 269 and cysteine 273 are joined by a disulfide. Aspartate 278 is an active-site residue. Cysteine 312 and cysteine 349 are joined by a disulfide. Asparagine 331 carries N-linked (GlcNAc...) asparagine glycosylation. Positions 391 to 419 (VGLARAQSRSTDRAERRTTQAQFFKRRPG) are disordered.

This sequence belongs to the peptidase A1 family. As to expression, expressed at the highest levels in the kidney, at a moderate level in the lung, and at low levels in the spleen and adipose tissue.

The protein resides in the secreted. In terms of biological role, may be involved in processing of pneumocyte surfactant precursors. The sequence is that of Napsin-A (Napsa) from Mus musculus (Mouse).